Consider the following 177-residue polypeptide: Large ribosomal subunit protein uL6 (177 aa).

It belongs to the universal ribosomal protein uL6 family. In terms of assembly, part of the 50S ribosomal subunit.

Functionally, this protein binds to the 23S rRNA, and is important in its secondary structure. It is located near the subunit interface in the base of the L7/L12 stalk, and near the tRNA binding site of the peptidyltransferase center. The sequence is that of Large ribosomal subunit protein uL6 from Cronobacter sakazakii (strain ATCC BAA-894) (Enterobacter sakazakii).